Reading from the N-terminus, the 490-residue chain is Protein LMBR1L (490 aa).

The Extracellular portion of the chain corresponds to 1 to 21; the sequence is MEAPDYEVLSVREQLFHERIR. The segment at 1-59 is interaction with LGB; that stretch reads MEAPDYEVLSVREQLFHERIRECIISTLLFATLYILCHIFLTRFKKPAEFTTVDDEDAT. Residues 1–76 are LCN1-binding; the sequence is MEAPDYEVLS…LCTFTLAIAL (76 aa). Residues 22–42 form a helical membrane-spanning segment; the sequence is ECIISTLLFATLYILCHIFLT. Over 43–66 the chain is Cytoplasmic; sequence RFKKPAEFTTVDDEDATVNKIALE. A helical transmembrane segment spans residues 67–87; sequence LCTFTLAIALGAVLLLPFSII. Residues 88–114 are Extracellular-facing; it reads SNEVLLSLPRNYYIQWLNGSLIHGLWN. A helical transmembrane segment spans residues 115-135; sequence LVFLFSNLSLIFLMPFAYFFT. Residues 136-154 are Cytoplasmic-facing; it reads ESEGFAGSRRGVLGRVYET. A helical membrane pass occupies residues 155–175; it reads VVMLMLLTLLVLGMVWVASAI. At 176-196 the chain is on the extracellular side; the sequence is LDNNKASRESLYDFWEYYLPY. A helical membrane pass occupies residues 197-217; that stretch reads LYSCISFLGVLLLLVCTPLGL. The Cytoplasmic segment spans residues 218-305; the sequence is ARMFSVTGKL…NLGYPLAMLC (88 aa). A helical transmembrane segment spans residues 306-326; the sequence is LLVLTGLSVLIVAIHILELLI. At 327–350 the chain is on the extracellular side; sequence DEAAMPRGMQDASLGQVSFSRLGS. A helical transmembrane segment spans residues 351-371; that stretch reads FGAVIQVALIFYLMVSSVVGF. The Cytoplasmic portion of the chain corresponds to 372-388; it reads YSSPLFRSLRPRWHDTA. Residues 389-409 traverse the membrane as a helical segment; the sequence is MTQIIGNCVCLLVLSSALPVF. The Extracellular portion of the chain corresponds to 410-431; the sequence is SRTLGLTRFDLLGDFGRFNWLG. A helical transmembrane segment spans residues 432 to 452; it reads NFYIVFLYNAAFAGLTTLCLV. The Cytoplasmic segment spans residues 453–490; that stretch reads KTFTAAVRAELIRAFGLDRLPLPVSGFPPRASRKTQHQ.

Belongs to the LIMR family. In terms of assembly, dimer. Can also form higher oligomers. Interacts with LCN1; this interaction mediates the endocytosis of LCN1. Interacts with UBAC2, FAF2, VCP, AMFR, ZNRF3, CTNNB1, LRP6, GSK3A, GSK3B, FZD6, DVL2 and RNF43. Interaction with LGB and SCGB1A1 is controversial.

It is found in the cell membrane. The protein localises to the endoplasmic reticulum membrane. Plays an essential role in lymphocyte development by negatively regulating the canonical Wnt signaling pathway. In association with UBAC2 and E3 ubiquitin-protein ligase AMFR, promotes the ubiquitin-mediated degradation of CTNNB1 and Wnt receptors FZD6 and LRP6. LMBR1L stabilizes the beta-catenin destruction complex that is required for regulating CTNNB1 levels. Acts as a LCN1 receptor and can mediate its endocytosis. The polypeptide is Protein LMBR1L (LMBR1L) (Pongo abelii (Sumatran orangutan)).